The following is a 365-amino-acid chain: DNA replication and repair protein RecF (365 aa).

An ATP-binding site is contributed by 30–37; it reads GRNAQGKT.

Belongs to the RecF family.

The protein localises to the cytoplasm. Its function is as follows. The RecF protein is involved in DNA metabolism; it is required for DNA replication and normal SOS inducibility. RecF binds preferentially to single-stranded, linear DNA. It also seems to bind ATP. This is DNA replication and repair protein RecF from Streptococcus pneumoniae serotype 2 (strain D39 / NCTC 7466).